Here is a 411-residue protein sequence, read N- to C-terminus: Peptidase T (411 aa).

Position 79 (His-79) interacts with Zn(2+). Residue Asp-81 is part of the active site. Asp-142 lines the Zn(2+) pocket. Glu-176 functions as the Proton acceptor in the catalytic mechanism. Zn(2+) contacts are provided by Glu-177, Asp-199, and His-381.

This sequence belongs to the peptidase M20B family. Zn(2+) is required as a cofactor.

The protein localises to the cytoplasm. It carries out the reaction Release of the N-terminal residue from a tripeptide.. In terms of biological role, cleaves the N-terminal amino acid of tripeptides. The polypeptide is Peptidase T (Geobacillus thermodenitrificans (strain NG80-2)).